Consider the following 1241-residue polypeptide: Putative urea carboxylase (1241 aa).

In terms of domain architecture, Biotin carboxylation spans 3–459 (ALKTLLIANR…LTKFLNNFEY (457 aa)). The ATP site is built by lysine 117 and glutamate 201. An ATP-grasp domain is found at 121-321 (RELATKAGVP…LVELMLRQAD (201 aa)). Residues 1159-1239 (EELLKDPEIT…EAGKPLMLVR (81 aa)) enclose the Biotinyl-binding domain. Position 1202 is an N6-biotinyllysine (lysine 1202).

Biotin serves as cofactor.

The catalysed reaction is urea + hydrogencarbonate + ATP = urea-1-carboxylate + ADP + phosphate + H(+). In terms of biological role, involved in the utilization of lactams. Required for the conversion of exogenous 2-pyrrolidinone (gamma-butyrolactam) to endogenous gamma-amino-n-butyrate (GABA). This is Putative urea carboxylase (lamA) from Emericella nidulans (strain FGSC A4 / ATCC 38163 / CBS 112.46 / NRRL 194 / M139) (Aspergillus nidulans).